A 608-amino-acid polypeptide reads, in one-letter code: Isoprene synthase, chloroplastic (608 aa).

The N-terminal 45 residues, methionine 1 to isoleucine 45, are a transit peptide targeting the chloroplast. Aspartate 350 is a binding site for dimethylallyl diphosphate. 2 residues coordinate Mg(2+): aspartate 350 and aspartate 354. The DDXXD motif signature appears at aspartate 350–aspartate 354. Residues glutamate 428, arginine 494, and asparagine 497 each coordinate dimethylallyl diphosphate. Residues asparagine 497, threonine 501, and glutamate 505 each coordinate Mg(2+).

This sequence belongs to the terpene synthase family. Tpsb subfamily. Requires Mg(2+) as cofactor. The cofactor is Mn(2+).

The protein localises to the plastid. The protein resides in the chloroplast. It catalyses the reaction dimethylallyl diphosphate = isoprene + diphosphate. Its function is as follows. Lyase that catalyzes the formation of isoprene from dimethylallyl diphosphate. This chain is Isoprene synthase, chloroplastic (ISPS), found in Pueraria montana var. lobata (Kudzu vine).